We begin with the raw amino-acid sequence, 151 residues long: uncharacterized protein (151 aa).

A run of 4 helical transmembrane segments spans residues 22–42 (IVSITFIAAIALAVIFGGFFF), 62–82 (ALFILACFAVGLIIDPLTKII), 97–117 (LFAFILYFISNLITICFADYF), and 121–141 (IYIPDVLLVVISAFMAIIELA).

It localises to the cell membrane. This is an uncharacterized protein from Bacillus subtilis (strain 168).